A 396-amino-acid chain; its full sequence is Phosphoglycerate kinase (396 aa).

Residues 23–25, Arg38, 61–64, Arg122, and Arg155 each bind substrate; these read DFN and HMGK. Residues Lys206, Gly296, Glu327, and 353–356 each bind ATP; that span reads GGDS.

It belongs to the phosphoglycerate kinase family. As to quaternary structure, monomer.

The protein localises to the cytoplasm. It carries out the reaction (2R)-3-phosphoglycerate + ATP = (2R)-3-phospho-glyceroyl phosphate + ADP. Its pathway is carbohydrate degradation; glycolysis; pyruvate from D-glyceraldehyde 3-phosphate: step 2/5. The chain is Phosphoglycerate kinase from Clostridium botulinum (strain Eklund 17B / Type B).